The following is a 426-amino-acid chain: Tryptophan--tRNA ligase (426 aa).

Positions Pro66–Asn74 match the 'HIGH' region motif. Positions Lys314 to Ser318 match the 'KMSKS' region motif.

It belongs to the class-I aminoacyl-tRNA synthetase family.

Its subcellular location is the cytoplasm. It carries out the reaction tRNA(Trp) + L-tryptophan + ATP = L-tryptophyl-tRNA(Trp) + AMP + diphosphate + H(+). This Thermoplasma volcanium (strain ATCC 51530 / DSM 4299 / JCM 9571 / NBRC 15438 / GSS1) protein is Tryptophan--tRNA ligase.